The following is a 203-amino-acid chain: Recombination protein RecR (203 aa).

Residues 57–73 (CQSCGTLKSNSLGCNNC) form a C4-type zinc finger. Residues 81-175 (NKICVVEDIA…KVTKLAQGLP (95 aa)) enclose the Toprim domain.

The protein belongs to the RecR family.

In terms of biological role, may play a role in DNA repair. It seems to be involved in an RecBC-independent recombinational process of DNA repair. It may act with RecF and RecO. The sequence is that of Recombination protein RecR from Pelagibacter ubique (strain HTCC1062).